The sequence spans 259 residues: 3-oxo-5-alpha-steroid 4-dehydrogenase 1 (259 aa).

5 helical membrane passes run 10–30 (LCLL…SIVG), 86–106 (VLLA…PVLI), 111–131 (PTLL…GYVQ), 146–166 (VTHP…VINI), and 206–226 (WCGF…LFTL).

This sequence belongs to the steroid 5-alpha reductase family. As to expression, liver and prostate (at a low level).

The protein localises to the microsome membrane. It is found in the endoplasmic reticulum membrane. It catalyses the reaction a 3-oxo-5alpha-steroid + NADP(+) = a 3-oxo-Delta(4)-steroid + NADPH + H(+). The enzyme catalyses 5alpha-pregnane-3,20-dione + NADP(+) = progesterone + NADPH + H(+). It carries out the reaction 17beta-hydroxy-5alpha-androstan-3-one + NADP(+) = testosterone + NADPH + H(+). The catalysed reaction is androst-4-ene-3,17-dione + NADPH + H(+) = 5alpha-androstan-3,17-dione + NADP(+). Functionally, converts testosterone into 5-alpha-dihydrotestosterone and progesterone or corticosterone into their corresponding 5-alpha-3-oxosteroids. It plays a central role in sexual differentiation and androgen physiology. In Rattus norvegicus (Rat), this protein is 3-oxo-5-alpha-steroid 4-dehydrogenase 1.